A 509-amino-acid chain; its full sequence is DNA nucleotidylexotransferase (509 aa).

Residues 1 to 25 (MDPLCTASSGPRKKRPRQVGASMAS) form a disordered region. The Nuclear localization signal signature appears at 11 to 17 (PRKKRPR). Positions 27 to 124 (PHDIKFQNLV…KPVEITGKHQ (98 aa)) constitute a BRCT domain. The tract at residues 151 to 509 (SQYACQRKTT…DYIEPWERNA (359 aa)) is mediates interaction with DNTTIP2. The involved in DNA binding stretch occupies residues 258–262 (VGLKT). A 2'-deoxyribonucleoside 5'-triphosphate-binding positions include 333–338 (GFRRGK) and 342–345 (HDVD). The Mg(2+) site is built by aspartate 343, aspartate 345, and aspartate 433. An a 2'-deoxyribonucleoside 5'-triphosphate-binding site is contributed by 448–449 (GW).

The protein belongs to the DNA polymerase type-X family. In terms of assembly, interacts with PRP19 and DNTTIP1. Forms a ternary complex with DNTTIP2 and core histone. Released from this complex by PCNA. Interacts with TRERF1. Mg(2+) serves as cofactor.

It localises to the nucleus. It catalyses the reaction DNA(n) + a 2'-deoxyribonucleoside 5'-triphosphate = DNA(n+1) + diphosphate. In terms of biological role, template-independent DNA polymerase which catalyzes the random addition of deoxynucleoside 5'-triphosphate to the 3'-end of a DNA initiator. One of the in vivo functions of this enzyme is the addition of nucleotides at the junction (N region) of rearranged Ig heavy chain and T-cell receptor gene segments during the maturation of B- and T-cells. The protein is DNA nucleotidylexotransferase (DNTT) of Bos taurus (Bovine).